Consider the following 603-residue polypeptide: Beta-glucuronidase (603 aa).

Residues Asp-163 and Asn-412 each contribute to the D-glucuronate site. Glu-413 acts as the Proton donor in catalysis. D-glucuronate contacts are provided by Asn-466, Tyr-472, Glu-504, Trp-549, and Lys-568. The active-site Nucleophile is the Glu-504. Positions 566–568 match the N-K motif motif; the sequence is NKK.

The protein belongs to the glycosyl hydrolase 2 family. In terms of assembly, homotetramer.

It catalyses the reaction a beta-D-glucuronoside + H2O = D-glucuronate + an alcohol. The enzyme catalyses 4-methylumbelliferone beta-D-glucuronate + H2O = 4-methylumbelliferone + D-glucuronate. Its activity is regulated as follows. Potently inhibited by a set of synthetic compounds like thio-urea derivatives and analogs, and uronic isofagomine (UIFG) derivatives. Inhibitors of gut microbial beta-glucuronidases block the reactivation of glucuronidated cancer drugs, and thereby alleviate drug-induced GI toxicity. In terms of biological role, displays beta-glucuronidase activity with the artificial substrate p-nitrophenyl-beta-D-glucuronide (PNPG) and with 4-methylumbelliferyl-glucuronide. Is likely capable of scavenging glucuronate from a range of chemically distinct xenobiotic and endobiotic glucuronides present in the gastrointestinal (GI) tract, to be able to utilize these diverse sources of carbon. As part of the GI microbiome, this enzyme is able to reactivate glucuronide drug conjugates, such reactivated compounds can significantly damage the GI tract. This chain is Beta-glucuronidase (uidA), found in Escherichia coli (strain K12).